We begin with the raw amino-acid sequence, 131 residues long: Small ribosomal subunit protein bS6 (131 aa).

Residues 98 to 131 (EASPMVKAKDERRERRDDFANETADDSDAGDSEE) form a disordered region. Residues 104–116 (KAKDERRERRDDF) are compositionally biased toward basic and acidic residues. Over residues 120-131 (TADDSDAGDSEE) the composition is skewed to acidic residues.

Belongs to the bacterial ribosomal protein bS6 family.

In terms of biological role, binds together with bS18 to 16S ribosomal RNA. The protein is Small ribosomal subunit protein bS6 of Enterobacter sp. (strain 638).